We begin with the raw amino-acid sequence, 121 residues long: Protein MGF 110-5L (121 aa).

Residues 1-20 (MLVIFLGILGLLANQVSSQL) form the signal peptide. N-linked (GlcNAc...) asparagine; by host glycosylation is found at asparagine 62 and asparagine 116.

It belongs to the asfivirus MGF 110 family.

The sequence is that of Protein MGF 110-5L from African swine fever virus (isolate Portugal/Lis 57/1957) (ASFV).